We begin with the raw amino-acid sequence, 364 residues long: Esculetin O-methyltransferase (364 aa).

Residue asparagine 132 participates in bergaptol binding. S-adenosyl-L-homocysteine is bound by residues glycine 209, aspartate 232, aspartate 252, methionine 253, methionine 265, and lysine 266. Histidine 270 is a bergaptol binding site. Residue histidine 270 is the Proton acceptor of the active site.

Belongs to the class I-like SAM-binding methyltransferase superfamily. Cation-independent O-methyltransferase family. COMT subfamily. In terms of assembly, homodimer. As to expression, expressed ubiquitously.

The catalysed reaction is bergaptol + S-adenosyl-L-methionine = bergapten + S-adenosyl-L-homocysteine. It carries out the reaction xanthotoxol + S-adenosyl-L-methionine = xanthotoxin + S-adenosyl-L-homocysteine + H(+). It catalyses the reaction esculetin + S-adenosyl-L-methionine = isoscopoletin + S-adenosyl-L-homocysteine + H(+). The enzyme catalyses esculetin + S-adenosyl-L-methionine = scopoletin + S-adenosyl-L-homocysteine + H(+). It participates in aromatic compound metabolism. It functions in the pathway secondary metabolite biosynthesis. Inhibited by zinc Zn(2+), copper Cu(2+) and silver Ag(+) ions. O-methyltransferase involved in the biosynthesis of methoxylated coumarins natural products such as isoscopoletin, scopoletin, xanthotoxin and bergapten, photosensitizers used for medical purpose such as treating psoriasis and vitiligo or facilitating resistance to microbial infection and other stresses. Catalyzes the methylation of esculetin, bergaptol and xanthotoxol, but seems inactive on scopoletin and isoscopoletin. The protein is Esculetin O-methyltransferase of Kitagawia praeruptora (Peucedanum praeruptorum).